A 521-amino-acid chain; its full sequence is Bifunctional purine biosynthesis protein PurH (521 aa).

In terms of domain architecture, MGS-like spans 1-145 (MIKQALISVS…KNHRDVTVVV (145 aa)).

The protein belongs to the PurH family.

It catalyses the reaction (6R)-10-formyltetrahydrofolate + 5-amino-1-(5-phospho-beta-D-ribosyl)imidazole-4-carboxamide = 5-formamido-1-(5-phospho-D-ribosyl)imidazole-4-carboxamide + (6S)-5,6,7,8-tetrahydrofolate. The enzyme catalyses IMP + H2O = 5-formamido-1-(5-phospho-D-ribosyl)imidazole-4-carboxamide. The protein operates within purine metabolism; IMP biosynthesis via de novo pathway; 5-formamido-1-(5-phospho-D-ribosyl)imidazole-4-carboxamide from 5-amino-1-(5-phospho-D-ribosyl)imidazole-4-carboxamide (10-formyl THF route): step 1/1. It functions in the pathway purine metabolism; IMP biosynthesis via de novo pathway; IMP from 5-formamido-1-(5-phospho-D-ribosyl)imidazole-4-carboxamide: step 1/1. The chain is Bifunctional purine biosynthesis protein PurH from Burkholderia cenocepacia (strain HI2424).